Consider the following 665-residue polypeptide: Beta-galactosidase LacZ (665 aa).

Arginine 110 contacts substrate. Cysteine 114 is a Zn(2+) binding site. Asparagine 148 provides a ligand contact to substrate. The active-site Proton donor is glutamate 149. Residues cysteine 157, cysteine 159, and cysteine 162 each coordinate Zn(2+). Catalysis depends on glutamate 303, which acts as the Nucleophile. Residues tryptophan 311 and 351-354 (EKFH) each bind substrate.

Belongs to the glycosyl hydrolase 42 family.

It catalyses the reaction Hydrolysis of terminal non-reducing beta-D-galactose residues in beta-D-galactosides.. The protein is Beta-galactosidase LacZ of Heyndrickxia coagulans (Weizmannia coagulans).